Reading from the N-terminus, the 506-residue chain is Protein spinster homolog 1 (506 aa).

The tract at residues 1 to 42 (MSQADADITPFFADDNEGEGPVENGVGSPLPEDEEEESPSGV) is disordered. Over residues 21–30 (PVENGVGSPL) the composition is skewed to low complexity. 12 helical membrane-spanning segments follow: residues 52 to 71 (IVLCYINLLNYMDRFTVAGV), 87 to 107 (GLLQTVFICSYMFLAPLFGYL), 115 to 135 (LIMCVGIFFWSVVTLASSFIG), 149 to 169 (VGVGEASYSTIAPTIIADLFV), 176 to 196 (MLSIFYFAIPVGSGMGYIVGS), 207 to 227 (WALRVTPGLGLLAVFLLMLVV), 266 to 286 (FGFTAVAFVTGSLALWAPAFL), 310 to 330 (LIFGAITVVTGILGVASGVQA), 344 to 364 (LVCAAGLLLAAPFLYLSIMFA), 373 to 393 (VFIFLGETFLSMNWAIVADIL), 408 to 428 (FQIVLSHLLGDAISPYLIGVV), and 450 to 470 (LLCSFVAVAGGAFFLATAVFI).

Belongs to the major facilitator superfamily. Spinster (TC 2.A.1.49) family. As to expression, expressed in yolk cells.

The protein resides in the lysosome membrane. It catalyses the reaction a 1-acyl-sn-glycero-3-phosphocholine(out) + H(+)(out) = a 1-acyl-sn-glycero-3-phosphocholine(in) + H(+)(in). It carries out the reaction a 1-acyl-sn-glycero-3-phosphoethanolamine(out) + H(+)(out) = a 1-acyl-sn-glycero-3-phosphoethanolamine(in) + H(+)(in). The enzyme catalyses a 1-O-(1Z-alkenyl)-sn-glycero-3-phosphocholine(out) + H(+)(out) = a 1-O-(1Z-alkenyl)-sn-glycero-3-phosphocholine(in) + H(+)(in). The catalysed reaction is a 1-O-(1Z-alkenyl)-sn-glycero-3-phosphoethanolamine(out) + H(+)(out) = a 1-O-(1Z-alkenyl)-sn-glycero-3-phosphoethanolamine(in) + H(+)(in). Functionally, mediates the rate-limiting, proton-dependent, lysosomal efflux of lysophospholipids. Selective for zwitterionic headgroups such as lysophosphatidylcholine (LPC) and lysophosphatidylethanolamine (LPE). Essential player in lysosomal homeostasis. Critical for embryogenesis. Involved in the regulation of developmental senescence. The polypeptide is Protein spinster homolog 1 (spns1) (Danio rerio (Zebrafish)).